Consider the following 200-residue polypeptide: Dephospho-CoA kinase (200 aa).

Positions 4–200 (VIGLTGGIAS…AILKKWNIID (197 aa)) constitute a DPCK domain. 12-17 (ASGKST) contacts ATP.

It belongs to the CoaE family.

The protein localises to the cytoplasm. The catalysed reaction is 3'-dephospho-CoA + ATP = ADP + CoA + H(+). The protein operates within cofactor biosynthesis; coenzyme A biosynthesis; CoA from (R)-pantothenate: step 5/5. In terms of biological role, catalyzes the phosphorylation of the 3'-hydroxyl group of dephosphocoenzyme A to form coenzyme A. The protein is Dephospho-CoA kinase of Bacillus anthracis.